The following is a 260-amino-acid chain: MLESSKVPALTRAIDILNLIARIGPCSAATIIDTLGIPKSTAYLLLNELRRQRFLSLDHQENFCLWTRLVELSGHALSKMDLRELARPRLTQLMDTTGLLCHLGIIDNGSAYYILKVESSATISVRSHEGKSLSLYRSGIGKCLLAWQPAAVQQSIIEGLVWEQATPTTITHPQQLHEELARIRRQGWSYDNGEDYADVRCVAAPVFNANNELTAAISVVGTRLQINEEYRDYLAGKAIACARDISRLLGWKSPFDLQAS.

In terms of domain architecture, HTH iclR-type spans 7 to 67 (VPALTRAIDI…DHQENFCLWT (61 aa)). The H-T-H motif DNA-binding region spans 28–47 (AATIIDTLGIPKSTAYLLLN). One can recognise an IclR-ED domain in the interval 82–251 (LRELARPRLT…ARDISRLLGW (170 aa)).

This is an uncharacterized protein from Escherichia coli (strain K12).